Reading from the N-terminus, the 135-residue chain is Large ribosomal subunit protein mL54 (135 aa).

The N-terminal 14 residues, 1-14 (MAAAHLLRASRVWA), are a transit peptide targeting the mitochondrion.

Belongs to the mitochondrion-specific ribosomal protein mL54 family. Component of the mitochondrial ribosome large subunit (39S) which comprises a 16S rRNA and about 50 distinct proteins.

It is found in the mitochondrion. The polypeptide is Large ribosomal subunit protein mL54 (Mrpl54) (Mus musculus (Mouse)).